Reading from the N-terminus, the 655-residue chain is Sphingomyelin phosphodiesterase 3 (655 aa).

At 1–10 (MVLYTTPFPN) the chain is on the cytoplasmic side. An intramembrane region (helical) is located at residues 11–31 (SCLSALHAVSWALIFPCYWLV). The Cytoplasmic portion of the chain corresponds to 32–64 (DRLVASFIPTTYEKRQRADDPCYLQLFCTVLFT). Residues Cys-53 and Cys-59 are each lipidated (S-palmitoyl cysteine). Positions 65–85 (PVYLALLVAALPFAFLGFIFW) form an intramembrane region, helical. At 86-655 (SPLQSARRPY…LMVSAGEEEA (570 aa)) the chain is on the cytoplasmic side. Ser-178 is modified (phosphoserine). Disordered stretches follow at residues 209-237 (VEYKGDGGRHPSDEAANGPASGEQADGSL) and 250-320 (GGRA…SNSK). Positions 211-221 (YKGDGGRHPSD) are enriched in basic and acidic residues. Ser-289 carries the post-translational modification Phosphoserine. Glu-362 is a binding site for Mg(2+). S-palmitoyl cysteine attachment occurs at residues Cys-395 and Cys-396. His-639 acts as the Proton acceptor in catalysis.

It belongs to the neutral sphingomyelinase family. Mg(2+) is required as a cofactor. In terms of processing, palmitoylated, palmitoylation-deficient proteins are targeted for lysosomal degradation. As to expression, in brain sections, it is restricted to neurons and especially prominent in large cells, including Purkinje cells, pyramidal cells, neurons of the dentate gyrus granular layer, and neurons in the pontine nuclei. Also present in the hypothalamic nuclei, neurons in the piriform cortex, and nuclei of the brainstem (at protein level). Mainly expressed in brain and jejunum. Weakly or not expressed in heart, spleen, lung, liver, kidney and testis.

It localises to the golgi apparatus membrane. The protein resides in the cell membrane. It carries out the reaction a sphingomyelin + H2O = phosphocholine + an N-acylsphing-4-enine + H(+). The catalysed reaction is N-(15Z-tetracosenoyl)sphing-4-enine-1-phosphocholine + H2O = N-(15Z-tetracosenoyl)-sphing-4-enine + phosphocholine + H(+). The enzyme catalyses N-(tetracosanoyl)-sphing-4-enine-1-phosphocholine + H2O = N-tetracosanoyl-sphing-4-enine + phosphocholine + H(+). It catalyses the reaction an N-(acyl)-sphingosylphosphocholine + H2O = an N-acyl-sphingoid base + phosphocholine + H(+). It carries out the reaction 1-hexadecanoyl-sn-glycero-3-phosphocholine + H2O = 1-hexadecanoyl-sn-glycerol + phosphocholine + H(+). The catalysed reaction is 1-O-octadecyl-sn-glycero-3-phosphocholine + H2O = 1-O-octadecyl-sn-glycerol + phosphocholine + H(+). The enzyme catalyses a sphingosylphosphocholine + H2O = a sphingoid base + phosphocholine + H(+). It catalyses the reaction N-(hexadecanoyl)-sphing-4-enine-1-phosphocholine + H2O = N-hexadecanoylsphing-4-enine + phosphocholine + H(+). Its pathway is lipid metabolism; sphingolipid metabolism. Inhibited by nSMase inhibitor GW4869. Binding of anionic phospholipids (APLs) such as phosphatidylserine (PS) and phosphatidic acid (PA) increases enzymatic activity. Functionally, catalyzes the hydrolysis of sphingomyelin to form ceramide and phosphocholine. Ceramide mediates numerous cellular functions, such as apoptosis and growth arrest, and is capable of regulating these 2 cellular events independently. Also hydrolyzes sphingosylphosphocholine. Binds to anionic phospholipids (APLs) such as phosphatidylserine (PS) and phosphatidic acid (PA) that modulate enzymatic activity and subcellular location. Regulates the cell cycle by acting as a growth suppressor in confluent cells. Acts as a regulator of postnatal development and participates in bone and dentin mineralization. May be involved in IL-1-beta-induced JNK activation in hepatocytes. May act as a mediator in transcriptional regulation of NOS2/iNOS via the NF-kappa-B activation under inflammatory conditions. The chain is Sphingomyelin phosphodiesterase 3 from Rattus norvegicus (Rat).